The following is a 118-amino-acid chain: Basic phospholipase A2 PA-5 (118 aa).

Intrachain disulfides connect cysteine 11–cysteine 71, cysteine 27–cysteine 117, cysteine 29–cysteine 45, cysteine 44–cysteine 98, cysteine 51–cysteine 91, cysteine 60–cysteine 84, and cysteine 78–cysteine 89. Residues tyrosine 28, glycine 30, and glycine 32 each contribute to the Ca(2+) site. Residue histidine 48 is part of the active site. A Ca(2+)-binding site is contributed by aspartate 49. Aspartate 92 is a catalytic residue.

Belongs to the phospholipase A2 family. Group I subfamily. D49 sub-subfamily. Ca(2+) is required as a cofactor. In terms of tissue distribution, expressed by the venom gland.

Its subcellular location is the secreted. The catalysed reaction is a 1,2-diacyl-sn-glycero-3-phosphocholine + H2O = a 1-acyl-sn-glycero-3-phosphocholine + a fatty acid + H(+). PLA2 catalyzes the calcium-dependent hydrolysis of the 2-acyl groups in 3-sn-phosphoglycerides. In Pseudechis australis (Mulga snake), this protein is Basic phospholipase A2 PA-5.